We begin with the raw amino-acid sequence, 470 residues long: Histone deacetylase HOS1 (470 aa).

Residues 47–392 (LTFPYARKDD…YTYLTWCVTK (346 aa)) are histone deacetylase. Position 110 is a phosphoserine (serine 110). The active site involves histidine 211.

The protein belongs to the histone deacetylase family. HD type 1 subfamily.

The protein localises to the nucleus. It carries out the reaction N(6)-acetyl-L-lysyl-[histone] + H2O = L-lysyl-[histone] + acetate. Responsible for the deacetylation of lysine residues on the N-terminal part of the core histones (H2A, H2B, H3 and H4). Histone deacetylation plays an important role in transcriptional regulation, cell cycle progression and developmental events. Histone deacetylases act via the formation of large multiprotein complexes. The sequence is that of Histone deacetylase HOS1 (HOS1) from Saccharomyces cerevisiae (strain ATCC 204508 / S288c) (Baker's yeast).